The following is a 99-amino-acid chain: DNA-binding protein Fis (99 aa).

Positions 75–94 (QTRAALMLGVNRGTLRKKLK) form a DNA-binding region, H-T-H motif.

This sequence belongs to the transcriptional regulatory Fis family. In terms of assembly, homodimer.

In terms of biological role, activates ribosomal RNA transcription. Plays a direct role in upstream activation of rRNA promoters. The chain is DNA-binding protein Fis from Actinobacillus succinogenes (strain ATCC 55618 / DSM 22257 / CCUG 43843 / 130Z).